The sequence spans 500 residues: ERAD-associated E3 ubiquitin-protein ligase HRD1 (500 aa).

Residues 1–3 (MIR) are Cytoplasmic-facing. The chain crosses the membrane as a helical span at residues 4 to 24 (LQTYAAFSLMATATAVYYAFS). Over 25–40 (SREQFYPAMVYLSTSK) the chain is Lumenal. The helical transmembrane segment at 41 to 61 (ICFVLLLNTGLVAMCVAWQLV) threads the bilayer. The Cytoplasmic portion of the chain corresponds to 62-98 (KRLFLGTLREAEVERLNEQAWREVVEILFAVTIFRQD). The helical transmembrane segment at 99–119 (FSVSFLAMVAALLLVKALHWL) threads the bilayer. At 120–135 (AQKRVEYIETTPSVPM) the chain is on the lumenal side. Residues 136–156 (LSHARIVSFMLFLLVVDCLFL) form a helical membrane-spanning segment. Residues 157 to 170 (SNSLRSLIHKREAS) lie on the Cytoplasmic side of the membrane. The helical transmembrane segment at 171–191 (VAIFFSFEYMILATSTVSTFV) threads the bilayer. Residues 192–225 (KYIFYVSDMLMEGQWEKKAVYTFYLELISDLVHL) are Lumenal-facing. The chain crosses the membrane as a helical span at residues 226–246 (SLYMLFFIAIFLNYGVPLHLI). The Cytoplasmic portion of the chain corresponds to 247–500 (RELYETFRNF…NENGEHTKSD (254 aa)). An RING-type; atypical zinc finger spans residues 292-330 (CIICREEMTTAKKLLCGHLFHVHCLRSWLERQHTCPTCR). Disordered regions lie at residues 337 to 375 (DNGR…SRRQ) and 398 to 438 (NNLN…SAPT). Low complexity predominate over residues 348-358 (VHPGVQPVPGN). Residues 398–426 (NNLNRYSTPPQSTSNGPQSGEASTSNQSP) are compositionally biased toward polar residues.

Belongs to the HRD1 family.

The protein resides in the endoplasmic reticulum membrane. It catalyses the reaction S-ubiquitinyl-[E2 ubiquitin-conjugating enzyme]-L-cysteine + [acceptor protein]-L-lysine = [E2 ubiquitin-conjugating enzyme]-L-cysteine + N(6)-ubiquitinyl-[acceptor protein]-L-lysine.. Its pathway is protein modification; protein ubiquitination. Probable component of the HRD1 ubiquitin ligase complex that mediates the rapid degradation of misfolded endoplasmic reticulum (ER) proteins, a process called ER-associated degradation (ERAD). This is ERAD-associated E3 ubiquitin-protein ligase HRD1 from Oryza sativa subsp. japonica (Rice).